A 69-amino-acid polypeptide reads, in one-letter code: Cytochrome c oxidase subunit 8A, mitochondrial (69 aa).

The transit peptide at Met1–Lys25 directs the protein to the mitochondrion. An SIFI-degron motif is present at residues Ser2–Leu19. The Mitochondrial matrix segment spans residues Ile26 to Gly36. Residues Ile37–Ser60 form a helical membrane-spanning segment. Topologically, residues His61 to Glu69 are mitochondrial intermembrane.

Belongs to the cytochrome c oxidase VIII family. Component of the cytochrome c oxidase (complex IV, CIV), a multisubunit enzyme composed of 14 subunits. The complex is composed of a catalytic core of 3 subunits MT-CO1, MT-CO2 and MT-CO3, encoded in the mitochondrial DNA, and 11 supernumerary subunits COX4I, COX5A, COX5B, COX6A, COX6B, COX6C, COX7A, COX7B, COX7C, COX8 and NDUFA4, which are encoded in the nuclear genome. The complex exists as a monomer or a dimer and forms supercomplexes (SCs) in the inner mitochondrial membrane with NADH-ubiquinone oxidoreductase (complex I, CI) and ubiquinol-cytochrome c oxidoreductase (cytochrome b-c1 complex, complex III, CIII), resulting in different assemblies (supercomplex SCI(1)III(2)IV(1) and megacomplex MCI(2)III(2)IV(2)). Post-translationally, in response to mitochondrial stress, the precursor protein is ubiquitinated by the SIFI complex in the cytoplasm before mitochondrial import, leading to its degradation. Within the SIFI complex, UBR4 initiates ubiquitin chain that are further elongated or branched by KCMF1.

It localises to the mitochondrion inner membrane. The protein operates within energy metabolism; oxidative phosphorylation. Functionally, component of the cytochrome c oxidase, the last enzyme in the mitochondrial electron transport chain which drives oxidative phosphorylation. The respiratory chain contains 3 multisubunit complexes succinate dehydrogenase (complex II, CII), ubiquinol-cytochrome c oxidoreductase (cytochrome b-c1 complex, complex III, CIII) and cytochrome c oxidase (complex IV, CIV), that cooperate to transfer electrons derived from NADH and succinate to molecular oxygen, creating an electrochemical gradient over the inner membrane that drives transmembrane transport and the ATP synthase. Cytochrome c oxidase is the component of the respiratory chain that catalyzes the reduction of oxygen to water. Electrons originating from reduced cytochrome c in the intermembrane space (IMS) are transferred via the dinuclear copper A center (CU(A)) of subunit 2 and heme A of subunit 1 to the active site in subunit 1, a binuclear center (BNC) formed by heme A3 and copper B (CU(B)). The BNC reduces molecular oxygen to 2 water molecules using 4 electrons from cytochrome c in the IMS and 4 protons from the mitochondrial matrix. This is Cytochrome c oxidase subunit 8A, mitochondrial (COX8A) from Hylobates agilis (Agile gibbon).